Consider the following 197-residue polypeptide: Recombination protein RecR (197 aa).

A C4-type zinc finger spans residues 56–71; sequence CKRCGSYAETEICNIC. Residues 79 to 174 enclose the Toprim domain; sequence HTFCVVEQPE…DVTRIAYGIT (96 aa).

The protein belongs to the RecR family.

Its function is as follows. May play a role in DNA repair. It seems to be involved in an RecBC-independent recombinational process of DNA repair. It may act with RecF and RecO. The polypeptide is Recombination protein RecR (Leptospira borgpetersenii serovar Hardjo-bovis (strain JB197)).